The chain runs to 910 residues: Disease susceptibility protein LOV1 (910 aa).

Residues 22–60 (ARLNGIGEQVDGLKRQLGRLQSLLKDADAKKHESERVRN) adopt a coiled-coil conformation. Residues 169–461 (EQSVEALAGH…AAEGIITSSD (293 aa)) enclose the NB-ARC domain. LRR repeat units follow at residues 584 to 609 (LPLLRVLDLSRVKFEGGKLPSSIGDL), 610 to 632 (IHLRFLSLHRAWISHLPSSLRNL), 634 to 655 (LLLYLNLGFNGMVHVPNVLKEM), 700 to 725 (MTKLRELSLFITDGSSDTLSSSLGQL), 726 to 751 (RSLEVLHLYDRQEPRVAYHGGEIVLN), and 847 to 871 (MPLLRALTICNCRKLKLPGGINYIT).

The protein belongs to the disease resistance NB-LRR family. RPP8/HRT subfamily.

In terms of biological role, confers susceptibility to the fungus Cochliobolus victoriae by conditioning victorin-dependent (victorin is a toxin synthesized by C.victoriae) induction of defense-associated proteins. This chain is Disease susceptibility protein LOV1 (LOV1), found in Arabidopsis thaliana (Mouse-ear cress).